Here is a 470-residue protein sequence, read N- to C-terminus: Protein escargot (470 aa).

The interval 271-309 (LNLNTSQPGEQAAAKTGDMSPETMPNASAKKDKNQPPRY) is disordered. C2H2-type zinc fingers lie at residues 309-331 (YQCP…QQFH), 344-366 (FSCK…IRTH), 370-392 (CKCN…IRTH), and 398-420 (FSCQ…LQTH). A C2H2-type 5; atypical zinc finger spans residues 426–449 (YSCTSCSKTFSRMSLLTKHSEGGC). The disordered stretch occupies residues 448–470 (GCPGGSAGSSSSSELNYAGYAEP).

This sequence belongs to the snail C2H2-type zinc-finger protein family. In terms of tissue distribution, expression is complex and dynamic. In early embryogenesis, expression begins on the dorsal side of the embryo. Expressed in a pattern of longitudinal stripes early in germband elongation. Later in embryogenesis, expression is in cells that correspond to the wing, haltere, leg and genital imaginal disks and the abdominal histoblasts. In the embryonic leg disk, expression is restricted to imaginal cells. Also expressed in the central nervous system (CNS), tracheae and head of stage 14 embryos. CNS and tracheal expression decays during later stages, though head expression persists until late in embryogenesis. In third instar larvae, expression is seen in the brain and in regions of many imaginal tissues including the eye-antennal, wing, leg and haltere disks. Expressed in embryonic, larval and adult male germline stem cells and in the somatic cells of the embryonic gonads.

It is found in the nucleus. Its function is as follows. Transcription factor that can both stimulate and repress transcription. Binds to the consensus DNA sequence 5'-A/GCAGGTG-3'. Regulates cell motility and adhesion during tracheal morphogenesis by stimulating transcription of the DE-cadherin gene shg at branch tips, thereby promoting tracheal tube fusion. Maintains diploidy in imaginal cells by inhibiting the transcription of genes required for endoreplication. Required for development of the genital disk and acts as an intrinsic determinant of wing cell fate. The somatic protein is required for maintenance of male germ cells. Acts with other members of the snail protein family to control embryonic central nervous system development. The chain is Protein escargot (esg) from Drosophila melanogaster (Fruit fly).